A 46-amino-acid polypeptide reads, in one-letter code: Iota-conotoxin-like r11b (46 aa).

4-hydroxyproline is present on residues Pro-2 and Pro-11. 4 disulfides stabilise this stretch: Cys-5–Cys-19, Cys-12–Cys-22, Cys-18–Cys-27, and Cys-21–Cys-38. Pro-29 is subject to 4-hydroxyproline. A D-phenylalanine modification is found at Phe-44.

Post-translationally, the natural D-Phe form of the peptide is more potent than the synthetic L-Phe form. As to expression, expressed by the venom duct.

The protein resides in the secreted. Functionally, iota-conotoxins bind to voltage-gated sodium channels (Nav) and act as agonists by shifting the voltage-dependence of activation to more hyperpolarized levels. Produces excitatory symptoms when injected intracranially into mice and is lethal at higher doses. Exposure to frog cutaneous pectoris induces spontaneous and repetitive action potentials. This effect is slowly reversible. Natural peptide (with D-Phe) is active on nerve, but not on muscle. Synthetic peptide (with L-Phe) is not active on both nerve and muscle. The protein is Iota-conotoxin-like r11b of Conus radiatus (Rayed cone).